The following is a 432-amino-acid chain: 3-phosphoshikimate 1-carboxyvinyltransferase (432 aa).

3-phosphoshikimate is bound by residues Lys-23, Ser-24, and Arg-28. Lys-23 is a phosphoenolpyruvate binding site. Phosphoenolpyruvate is bound by residues Gly-95 and Arg-123. Ser-167, Gln-169, Asp-317, and Lys-344 together coordinate 3-phosphoshikimate. Gln-169 is a binding site for phosphoenolpyruvate. Asp-317 acts as the Proton acceptor in catalysis. Residues Arg-348 and Arg-390 each contribute to the phosphoenolpyruvate site.

This sequence belongs to the EPSP synthase family. Monomer.

The protein localises to the cytoplasm. It carries out the reaction 3-phosphoshikimate + phosphoenolpyruvate = 5-O-(1-carboxyvinyl)-3-phosphoshikimate + phosphate. It functions in the pathway metabolic intermediate biosynthesis; chorismate biosynthesis; chorismate from D-erythrose 4-phosphate and phosphoenolpyruvate: step 6/7. In terms of biological role, catalyzes the transfer of the enolpyruvyl moiety of phosphoenolpyruvate (PEP) to the 5-hydroxyl of shikimate-3-phosphate (S3P) to produce enolpyruvyl shikimate-3-phosphate and inorganic phosphate. In Staphylococcus carnosus (strain TM300), this protein is 3-phosphoshikimate 1-carboxyvinyltransferase.